Here is a 35-residue protein sequence, read N- to C-terminus: N-acylglucosamine 2-epimerase (35 aa).

Positions 1–21 are leucine-zipper; the sequence is LNLVDQLGEADEELAGTYAEL.

It belongs to the N-acylglucosamine 2-epimerase family. As to quaternary structure, homodimer. Forms a heterodimer with renin and inhibits its activity.

It carries out the reaction an N-acyl-D-glucosamine = an N-acyl-D-mannosamine. Its pathway is amino-sugar metabolism; N-acetylneuraminate degradation. In terms of biological role, catalyzes the interconversion of N-acetylglucosamine to N-acetylmannosamine. Involved in the N-glycolylneuraminic acid (Neu5Gc) degradation pathway. This is N-acylglucosamine 2-epimerase from Canis lupus familiaris (Dog).